The primary structure comprises 407 residues: Phosphopentomutase (407 aa).

6 residues coordinate Mn(2+): Asp-10, Asp-306, His-311, Asp-347, His-348, and His-359.

It belongs to the phosphopentomutase family. Mn(2+) is required as a cofactor.

It is found in the cytoplasm. It carries out the reaction 2-deoxy-alpha-D-ribose 1-phosphate = 2-deoxy-D-ribose 5-phosphate. The catalysed reaction is alpha-D-ribose 1-phosphate = D-ribose 5-phosphate. The protein operates within carbohydrate degradation; 2-deoxy-D-ribose 1-phosphate degradation; D-glyceraldehyde 3-phosphate and acetaldehyde from 2-deoxy-alpha-D-ribose 1-phosphate: step 1/2. Its function is as follows. Isomerase that catalyzes the conversion of deoxy-ribose 1-phosphate (dRib-1-P) and ribose 1-phosphate (Rib-1-P) to deoxy-ribose 5-phosphate (dRib-5-P) and ribose 5-phosphate (Rib-5-P), respectively. The chain is Phosphopentomutase from Yersinia pestis bv. Antiqua (strain Angola).